Reading from the N-terminus, the 481-residue chain is Proline--tRNA ligase (481 aa).

It belongs to the class-II aminoacyl-tRNA synthetase family. ProS type 3 subfamily. As to quaternary structure, homodimer.

It is found in the cytoplasm. The enzyme catalyses tRNA(Pro) + L-proline + ATP = L-prolyl-tRNA(Pro) + AMP + diphosphate. Its function is as follows. Catalyzes the attachment of proline to tRNA(Pro) in a two-step reaction: proline is first activated by ATP to form Pro-AMP and then transferred to the acceptor end of tRNA(Pro). This is Proline--tRNA ligase from Chlorobaculum tepidum (strain ATCC 49652 / DSM 12025 / NBRC 103806 / TLS) (Chlorobium tepidum).